The chain runs to 170 residues: Ribosome maturation factor RimM (170 aa).

A PRC barrel domain is found at 97 to 170 (HPDEYYWVDL…RIVVDWDPEF (74 aa)).

Belongs to the RimM family. Binds ribosomal protein uS19.

It is found in the cytoplasm. Its function is as follows. An accessory protein needed during the final step in the assembly of 30S ribosomal subunit, possibly for assembly of the head region. Essential for efficient processing of 16S rRNA. May be needed both before and after RbfA during the maturation of 16S rRNA. It has affinity for free ribosomal 30S subunits but not for 70S ribosomes. This Xylella fastidiosa (strain M12) protein is Ribosome maturation factor RimM.